The sequence spans 294 residues: Acetylglutamate kinase (294 aa).

Substrate-binding positions include 60 to 61, arginine 82, and asparagine 186; that span reads GG.

It belongs to the acetylglutamate kinase family. ArgB subfamily.

Its subcellular location is the cytoplasm. The enzyme catalyses N-acetyl-L-glutamate + ATP = N-acetyl-L-glutamyl 5-phosphate + ADP. The protein operates within amino-acid biosynthesis; L-arginine biosynthesis; N(2)-acetyl-L-ornithine from L-glutamate: step 2/4. Functionally, catalyzes the ATP-dependent phosphorylation of N-acetyl-L-glutamate. The chain is Acetylglutamate kinase from Methanospirillum hungatei JF-1 (strain ATCC 27890 / DSM 864 / NBRC 100397 / JF-1).